A 417-amino-acid polypeptide reads, in one-letter code: Serine hydroxymethyltransferase (417 aa).

(6S)-5,6,7,8-tetrahydrofolate-binding positions include Leu-112 and 116–118 (GHL). The residue at position 221 (Lys-221) is an N6-(pyridoxal phosphate)lysine. Glu-247 is a (6S)-5,6,7,8-tetrahydrofolate binding site.

The protein belongs to the SHMT family. In terms of assembly, homodimer. It depends on pyridoxal 5'-phosphate as a cofactor.

It is found in the cytoplasm. The enzyme catalyses (6R)-5,10-methylene-5,6,7,8-tetrahydrofolate + glycine + H2O = (6S)-5,6,7,8-tetrahydrofolate + L-serine. It functions in the pathway one-carbon metabolism; tetrahydrofolate interconversion. The protein operates within amino-acid biosynthesis; glycine biosynthesis; glycine from L-serine: step 1/1. Catalyzes the reversible interconversion of serine and glycine with tetrahydrofolate (THF) serving as the one-carbon carrier. This reaction serves as the major source of one-carbon groups required for the biosynthesis of purines, thymidylate, methionine, and other important biomolecules. Also exhibits THF-independent aldolase activity toward beta-hydroxyamino acids, producing glycine and aldehydes, via a retro-aldol mechanism. The chain is Serine hydroxymethyltransferase from Borreliella afzelii (strain PKo) (Borrelia afzelii).